The following is a 1399-amino-acid chain: DNA-directed RNA polymerase subunit beta' (1399 aa).

C70, C72, C85, and C88 together coordinate Zn(2+). Mg(2+) is bound by residues D460, D462, and D464. The Zn(2+) site is built by C814, C888, C895, and C898.

Belongs to the RNA polymerase beta' chain family. The RNAP catalytic core consists of 2 alpha, 1 beta, 1 beta' and 1 omega subunit. When a sigma factor is associated with the core the holoenzyme is formed, which can initiate transcription. The cofactor is Mg(2+). It depends on Zn(2+) as a cofactor.

It catalyses the reaction RNA(n) + a ribonucleoside 5'-triphosphate = RNA(n+1) + diphosphate. Its function is as follows. DNA-dependent RNA polymerase catalyzes the transcription of DNA into RNA using the four ribonucleoside triphosphates as substrates. This Pseudomonas fluorescens (strain Pf0-1) protein is DNA-directed RNA polymerase subunit beta'.